Consider the following 396-residue polypeptide: Elongation factor Tu (396 aa).

Positions 10–206 constitute a tr-type G domain; the sequence is KPHCNIGTIG…QVDAYIPQPE (197 aa). Residues 19 to 26 form a G1 region; the sequence is GHVDHGKT. GTP is bound at residue 19 to 26; the sequence is GHVDHGKT. Thr-26 provides a ligand contact to Mg(2+). A G2 region spans residues 60–64; the sequence is GITIS. Residues 81 to 84 are G3; it reads DCPG. Residues 81–85 and 136–139 each bind GTP; these read DCPGH and NKVD. Residues 136–139 are G4; sequence NKVD. The segment at 174 to 176 is G5; the sequence is SAL.

It belongs to the TRAFAC class translation factor GTPase superfamily. Classic translation factor GTPase family. EF-Tu/EF-1A subfamily. As to quaternary structure, monomer.

The protein resides in the cytoplasm. The catalysed reaction is GTP + H2O = GDP + phosphate + H(+). Its function is as follows. GTP hydrolase that promotes the GTP-dependent binding of aminoacyl-tRNA to the A-site of ribosomes during protein biosynthesis. The chain is Elongation factor Tu from Gluconobacter oxydans (strain 621H) (Gluconobacter suboxydans).